The primary structure comprises 216 residues: Small ribosomal subunit protein uS3c (216 aa).

Residues 43 to 118 enclose the KH type-2 domain; the sequence is INNYVKKNMR…KLNITITRIE (76 aa).

The protein belongs to the universal ribosomal protein uS3 family. As to quaternary structure, part of the 30S ribosomal subunit.

It is found in the plastid. The sequence is that of Small ribosomal subunit protein uS3c (rps3) from Cuscuta reflexa (Southern Asian dodder).